The chain runs to 285 residues: MRSSVYSENTYNCIRTSKEHLTERRRVAMAPMFQHFLNLCVEKFPESIEHKDTDGNGNFTTAILEREIIYIPEDDTDSIDSVDSLKCINYKLHKSRGDQVLDACVQLIDKHLGAKYRRASRIMYGNRKPWKANKLAEMKSAGLVYVCYWDNGVLGAFTSFMLTEETGLVEGDALHEVSVPVIYLYEVHVASAHRGHGIGRRLLEHALCDGVARHTRRMCDNFFGVALTVFSDNTRARRLYEALGFYRAPGSPAPASPTIRHTRHGGGRVVVPCDPLYYVYCLHMP.

The N-acetyltransferase domain occupies 88–274 (INYKLHKSRG…GGGRVVVPCD (187 aa)). Residues Tyr116, 163 to 165 (TEE), and Tyr185 each bind substrate. Residues 187-189 (VHV) and 195-200 (GHGIGR) contribute to the acetyl-CoA site. Thr228 is a binding site for substrate. Asn233 serves as a coordination point for acetyl-CoA.

This sequence belongs to the acetyltransferase family. NAA40 subfamily.

The protein localises to the nucleus. It localises to the cytoplasm. The catalysed reaction is N-terminal L-seryl-[histone H4] + acetyl-CoA = N-terminal N(alpha)-acetyl-L-seryl-[histone H4] + CoA + H(+). It carries out the reaction N-terminal L-seryl-[histone H2A] + acetyl-CoA = N-terminal N(alpha)-acetyl-L-seryl-[histone H2A] + CoA + H(+). Functionally, N-alpha-acetyltransferase that specifically mediates the acetylation of the N-terminal residues of histones H4 and H2A. This Saccharomyces cerevisiae (strain ATCC 204508 / S288c) (Baker's yeast) protein is N-alpha-acetyltransferase 40.